The following is a 289-amino-acid chain: Ribosomal protein L11 methyltransferase (289 aa).

S-adenosyl-L-methionine-binding residues include T135, G156, D179, and N225.

The protein belongs to the methyltransferase superfamily. PrmA family.

It is found in the cytoplasm. The enzyme catalyses L-lysyl-[protein] + 3 S-adenosyl-L-methionine = N(6),N(6),N(6)-trimethyl-L-lysyl-[protein] + 3 S-adenosyl-L-homocysteine + 3 H(+). Functionally, methylates ribosomal protein L11. This Chlorobaculum parvum (strain DSM 263 / NCIMB 8327) (Chlorobium vibrioforme subsp. thiosulfatophilum) protein is Ribosomal protein L11 methyltransferase.